Here is a 571-residue protein sequence, read N- to C-terminus: Hemagglutinin-neuraminidase (571 aa).

Residues 1-26 (MDRAVSRVVLENEEREAKNTWRFVFR) are Intravirion-facing. The chain crosses the membrane as a helical span at residues 27 to 47 (IAVLLLIVMTLAISAAALVYS). The Virion surface portion of the chain corresponds to 48-571 (MGASTPRDLA…LVEILKDDRV (524 aa)). N119 carries N-linked (GlcNAc...) asparagine; by host glycosylation. The interval 124–152 (GAPVHDPDYIGGIGKELIVDDTSDVTSFY) is important for interaction with fusion/F protein. Disulfide bonds link C172–C196, C186–C247, and C238–C251. The tract at residues 234 to 239 (NRKSCS) is involved in neuraminidase activity. N341 carries N-linked (GlcNAc...) asparagine; by host glycosylation. C455 and C465 are oxidised to a cystine. N-linked (GlcNAc...) asparagine; by host glycosylation is found at N481 and N508. A disulfide bridge links C531 with C542.

This sequence belongs to the paramyxoviruses hemagglutinin-neuraminidase family. Homotetramer; composed of disulfide-linked homodimers. Interacts with F protein trimer. Interacts with host CG-1B; this interaction inhibits viral adsorption and replication rather than internalization.

It is found in the virion membrane. It localises to the host cell membrane. The enzyme catalyses Hydrolysis of alpha-(2-&gt;3)-, alpha-(2-&gt;6)-, alpha-(2-&gt;8)- glycosidic linkages of terminal sialic acid residues in oligosaccharides, glycoproteins, glycolipids, colominic acid and synthetic substrates.. In terms of biological role, mediates the viral entry into the host cell together with fusion/F protein. Attaches the virus to sialic acid-containing cell receptors and thereby initiates infection. Binding of HN protein to the receptor induces a conformational change that allows the F protein to trigger virion/cell membranes fusion. Neuraminidase activity ensures the efficient spread of the virus by dissociating the mature virions from the neuraminic acid containing glycoproteins. The chain is Hemagglutinin-neuraminidase (HN) from Newcastle disease virus (strain Iba/85) (NDV).